A 508-amino-acid polypeptide reads, in one-letter code: Light-independent protochlorophyllide reductase subunit B (508 aa).

A [4Fe-4S] cluster-binding site is contributed by Asp-36. Asp-294 acts as the Proton donor in catalysis. Gly-429–Met-430 is a substrate binding site.

The protein belongs to the ChlB/BchB/BchZ family. As to quaternary structure, protochlorophyllide reductase is composed of three subunits; ChlL, ChlN and ChlB. Forms a heterotetramer of two ChlB and two ChlN subunits. It depends on [4Fe-4S] cluster as a cofactor.

The enzyme catalyses chlorophyllide a + oxidized 2[4Fe-4S]-[ferredoxin] + 2 ADP + 2 phosphate = protochlorophyllide a + reduced 2[4Fe-4S]-[ferredoxin] + 2 ATP + 2 H2O. Its pathway is porphyrin-containing compound metabolism; chlorophyll biosynthesis (light-independent). Functionally, component of the dark-operative protochlorophyllide reductase (DPOR) that uses Mg-ATP and reduced ferredoxin to reduce ring D of protochlorophyllide (Pchlide) to form chlorophyllide a (Chlide). This reaction is light-independent. The NB-protein (ChlN-ChlB) is the catalytic component of the complex. This chain is Light-independent protochlorophyllide reductase subunit B, found in Gloeothece citriformis (strain PCC 7424) (Cyanothece sp. (strain PCC 7424)).